The sequence spans 503 residues: Opine oxidase subunit A (503 aa).

To T-protein and to dimethylglycine dehydrogenase. Heterodimer of a subunit A and a subunit B.

It participates in opine metabolism; octopine degradation. Functionally, oxidative cleavage of octopine into L-arginine and pyruvate. The chain is Opine oxidase subunit A (ooxA) from Agrobacterium tumefaciens (strain Ach5).